The primary structure comprises 387 residues: MLQRIYLDNNATTRIDPKVKEIMDPFLRDHYGNPSSLHQFGTETHPAIAEALDKLYKGINARDIDDVIITSCATESNNWVLKGVYFDECLKKGKNHIVTTVAEHPAVRSTCNFLESLGVEVTYLPINEHGSITAEQVKEAITEKTALVSVMWANNETGLIFPIEEIGAICKEKGVLFHTDAVQAIGKIPVDVLKANADFLSFSAHKFHGPKGIGGLYIRSGVGLTPLFHGGEHMNGRRSGTLNVPYIVGMGEAMKLAVEHLDYEKEVVGKLRDKLEEALLKIPDVMVVGDRIHRVPNTTLVSVRGIEGEAMLWDLNRSNIAASTGSACASEDLEANPVMVAIGASKELAHTAIRLSLSRFNTEAEIDKTIEVFSQAAIRLRNISSSY.

Residues 73–74, Asn-155, Gln-183, and 203–205 each bind pyridoxal 5'-phosphate; these read AT and SAH. An N6-(pyridoxal phosphate)lysine modification is found at Lys-206. Residue Thr-241 participates in pyridoxal 5'-phosphate binding. The active-site Cysteine persulfide intermediate is the Cys-328. A [2Fe-2S] cluster-binding site is contributed by Cys-328.

It belongs to the class-V pyridoxal-phosphate-dependent aminotransferase family. NifS/IscS subfamily. In terms of assembly, homodimer. Forms a heterotetramer with IscU, interacts with other sulfur acceptors. The cofactor is pyridoxal 5'-phosphate.

It localises to the cytoplasm. It catalyses the reaction (sulfur carrier)-H + L-cysteine = (sulfur carrier)-SH + L-alanine. It functions in the pathway cofactor biosynthesis; iron-sulfur cluster biosynthesis. In terms of biological role, master enzyme that delivers sulfur to a number of partners involved in Fe-S cluster assembly, tRNA modification or cofactor biosynthesis. Catalyzes the removal of elemental sulfur atoms from cysteine to produce alanine. Functions as a sulfur delivery protein for Fe-S cluster synthesis onto IscU, an Fe-S scaffold assembly protein, as well as other S acceptor proteins. The sequence is that of Cysteine desulfurase IscS from Helicobacter pylori (strain P12).